The chain runs to 401 residues: MAPNAAVLVRPHIAGVHHLPTGRRLPRLAPPQAVSPPFSRQKGSVVAASGRVWASASGSFEKDRIGDDDVLASPQIVEESKVDLLKILKSANTIIPHVVLGSTILALVYPPSFTWFTTRYYAPALGFLMFAVGVNSSVKDFIEAIQRPDAIAAGYVGQFIIKPFLGFLFGTLAVTIFNLPTALGAGIMLVSCVSGAQLSNYATFLTDPHMAPLSIVMTSLSTATAVFVTPTLSYFLIGKKLPVDVKGMMSSIVQIVVAPIAAGLLLNRYLPRLCSAIQPFLPPLSVFVTALCVGSPLAINIKAVLSPFGLATVLLLFAFHTSSFIAGYHLAGTWFRESADVKALQRTVSFETGMQSSLLALALANRFFPDPLVGVPPAISVVLMSLMGFALVMVWSKRTKE.

Residues 1-46 (MAPNAAVLVRPHIAGVHHLPTGRRLPRLAPPQAVSPPFSRQKGSVV) constitute a chloroplast transit peptide. The next 9 helical transmembrane spans lie at 93 to 113 (TIIP…PPSF), 122 to 142 (APAL…KDFI), 159 to 179 (FIIK…IFNL), 185 to 205 (AGIM…ATFL), 215 to 235 (IVMT…LSYF), 247 to 267 (GMMS…LLLN), 273 to 293 (LCSA…ALCV), 299 to 319 (INIK…LFAF), and 372 to 392 (LVGV…FALV).

It belongs to the bile acid:sodium symporter (BASS) (TC 2.A.28) family.

The protein resides in the membrane. Its subcellular location is the plastid. It is found in the chloroplast envelope. In terms of biological role, may function as sodium-coupled metabolite transporter across the chloroplast envelope. The polypeptide is Probable sodium/metabolite cotransporter BASS5, chloroplastic (BASS5) (Oryza sativa subsp. indica (Rice)).